The chain runs to 1040 residues: DNA cross-link repair 1A protein (1040 aa).

The nuclear localization region stretch occupies residues 1-190 (MLEDISEEDI…RAGDHPFSSP (190 aa)). The tract at residues 15-76 (SKRKPKRVDP…LGNAGCQTSV (62 aa)) is disordered. A compositionally biased stretch (basic and acidic residues) spans 53–65 (RAAEAKEVKDHEV). Residues 119–149 (DGYCPNCQMPFSSLIGQTPRWHVFECLDSPP) form a UBZ4-type zinc finger. Zn(2+)-binding residues include Cys-122, Cys-125, His-140, and Cys-144. Residues Lys-202, Lys-236, Lys-269, Lys-353, Lys-361, Lys-429, Lys-488, Lys-508, Lys-517, Lys-533, and Lys-536 each participate in a glycyl lysine isopeptide (Lys-Gly) (interchain with G-Cter in SUMO2) cross-link. Residues 396-614 (LPYDLACTGG…KSLSDLEFDA (219 aa)) form a nuclear focus formation region. Disordered stretches follow at residues 582-602 (GINL…CKRK) and 623-651 (SVEL…ACQK). A Phosphoserine modification is found at Ser-590. Residues Lys-668, Lys-670, and Lys-674 each participate in a glycyl lysine isopeptide (Lys-Gly) (interchain with G-Cter in SUMO2) cross-link.

The protein belongs to the DNA repair metallo-beta-lactamase (DRMBL) family. Binds constitutively to TP53BP1. Binds CDC27, which is itself a component of the anaphase promoting complex (APC). Binds PIAS1. As to expression, expressed in brain, heart, kidney, liver, pancreas, placenta and skeletal muscle.

It is found in the nucleus. The catalysed reaction is a beta-lactam + H2O = a substituted beta-amino acid. With respect to regulation, beta-lactamase activity is inhibited by sulbactam. May be required for DNA interstrand cross-link repair. Also required for checkpoint mediated cell cycle arrest in early prophase in response to mitotic spindle poisons. Possesses beta-lactamase activity, catalyzing the hydrolysis of penicillin G and nitrocefin. Exhibits no activity towards other beta-lactam antibiotic classes including cephalosporins (cefotaxime) and carbapenems (imipenem). In Homo sapiens (Human), this protein is DNA cross-link repair 1A protein (DCLRE1A).